Consider the following 379-residue polypeptide: Wnt inhibitory factor 1 (379 aa).

An N-terminal signal peptide occupies residues methionine 1–alanine 28. Residues leucine 38 to cysteine 177 form the WIF domain. N-linked (GlcNAc...) asparagine glycosylation is present at asparagine 88. 7 cysteine pairs are disulfide-bonded: cysteine 140–cysteine 177, cysteine 182–cysteine 192, cysteine 186–cysteine 198, cysteine 200–cysteine 209, cysteine 214–cysteine 224, cysteine 218–cysteine 230, and cysteine 232–cysteine 241. EGF-like domains lie at glutamine 178–glutamate 210, lysine 211–aspartate 242, lysine 243–glutamate 271, glutamate 274–serine 306, and lysine 307–asparagine 338. Asparagine 245 is a glycosylation site (N-linked (GlcNAc...) asparagine). 8 disulfides stabilise this stretch: cysteine 246–cysteine 256, cysteine 250–cysteine 262, cysteine 278–cysteine 288, cysteine 282–cysteine 294, cysteine 296–cysteine 305, cysteine 310–cysteine 320, cysteine 314–cysteine 326, and cysteine 328–cysteine 337. The segment at alanine 348–tryptophan 379 is disordered. The segment covering leucine 356–proline 373 has biased composition (basic and acidic residues).

In terms of assembly, interacts with MYOC. In terms of tissue distribution, expression highest in heart and lung. Lower in brain and eye.

The protein localises to the secreted. In terms of biological role, binds to WNT proteins and inhibits their activities. May be involved in mesoderm segmentation. The polypeptide is Wnt inhibitory factor 1 (Wif1) (Mus musculus (Mouse)).